The sequence spans 383 residues: Galactokinase (383 aa).

A substrate-binding site is contributed by 34–37 (EHTD). ATP is bound at residue 124-130 (GAGLSSS). Mg(2+)-binding residues include serine 130 and glutamate 162. Aspartate 174 functions as the Proton acceptor in the catalytic mechanism. Residue tyrosine 223 participates in substrate binding.

The protein belongs to the GHMP kinase family. GalK subfamily.

The protein localises to the cytoplasm. It catalyses the reaction alpha-D-galactose + ATP = alpha-D-galactose 1-phosphate + ADP + H(+). Its pathway is carbohydrate metabolism; galactose metabolism. Its function is as follows. Catalyzes the transfer of the gamma-phosphate of ATP to D-galactose to form alpha-D-galactose-1-phosphate (Gal-1-P). The protein is Galactokinase of Yersinia pseudotuberculosis serotype O:1b (strain IP 31758).